A 132-amino-acid chain; its full sequence is Large-conductance mechanosensitive channel (132 aa).

Transmembrane regions (helical) follow at residues 10–30 (FAVKGNVIDMAVGVVIGSAFG) and 76–96 (GNFIQVTIDFLIIAFCIFLAI).

It belongs to the MscL family. In terms of assembly, homopentamer.

The protein localises to the cell inner membrane. In terms of biological role, channel that opens in response to stretch forces in the membrane lipid bilayer. May participate in the regulation of osmotic pressure changes within the cell. The polypeptide is Large-conductance mechanosensitive channel (Campylobacter hominis (strain ATCC BAA-381 / DSM 21671 / CCUG 45161 / LMG 19568 / NCTC 13146 / CH001A)).